Consider the following 363-residue polypeptide: MSKLKDKIDDSLNDRLNREKAIELARIQIEKDFGKGSLIKMGESPVGKGIESISSGSILLDEAIGVGGYPRGRIIEIFGPESSGKTTLTLQAISEVQKNGGIAAFIDAEHALDPVYAKALGVNIDELWLSQPDTGEQALEIAEYLIRSGGVDLIVVDSVAALTPQAEIDGEMGDCQIGLQARLMSKALRKITGILSKSKTCIMFINQLRMKIGVMFGNPETTTGGNALKFYSSLRLEVRKIEQVTGSSADDVVGNKVRVKVVKNKVAPPFRKIELVIYFGKGISREASILDASIKYKLIQKIGSWYSIGDDKLGQGRESAIIYLIKEKELTNELEIKLRKIIFEGLSPDSIEIGPPNVKKDKE.

79 to 86 (GPESSGKT) lines the ATP pocket.

Belongs to the RecA family.

It is found in the cytoplasm. Can catalyze the hydrolysis of ATP in the presence of single-stranded DNA, the ATP-dependent uptake of single-stranded DNA by duplex DNA, and the ATP-dependent hybridization of homologous single-stranded DNAs. It interacts with LexA causing its activation and leading to its autocatalytic cleavage. This chain is Protein RecA, found in Borrelia turicatae (strain 91E135).